The primary structure comprises 663 residues: Telomere length regulator taz1 (663 aa).

Residues 15-72 (ENEGDQQFDKEVVQNSDSNIETGQISDSLTKAVEERAETESSSNLSNFTTSESESSKP) are disordered. 2 stretches are compositionally biased toward polar residues: residues 27–43 (VQNS…SDSL) and 54–67 (ESSS…TSES). Phosphoserine is present on Ser-332. Disordered stretches follow at residues 389-412 (GSTA…TFSE) and 471-554 (RAKS…PYEG). Composition is skewed to basic and acidic residues over residues 489–498 (KRGDNLRREA) and 512–524 (PPVR…ESRS). Positions 556–612 (RTRRKWTDEEENELYEMISQHGCCWSKIIHIQKLENGPLKTFGPTQIKDKARLIKAR) constitute a Myb-like domain.

Interacts with taf1 via the Myb domain, and ccq1.

It is found in the cytoplasm. The protein localises to the nucleus. The protein resides in the chromosome. Its subcellular location is the telomere. In terms of biological role, regulates telomere length and function. Required for the repression of telomere-adjacent gene expression and for normal meiosis or sporulation. It may be a negative regulator of the telomere-replicating enzyme, telomerase, or may protect against activation of telomerase-independent pathways of telomere elongation. It may be involved in the interactions between chromosomes and spindle proteins, disruption of these interactions would lead to defective meiosis. This is Telomere length regulator taz1 (taz1) from Schizosaccharomyces pombe (strain 972 / ATCC 24843) (Fission yeast).